The sequence spans 74 residues: Exodeoxyribonuclease 7 small subunit (74 aa).

It belongs to the XseB family. Heterooligomer composed of large and small subunits.

Its subcellular location is the cytoplasm. The catalysed reaction is Exonucleolytic cleavage in either 5'- to 3'- or 3'- to 5'-direction to yield nucleoside 5'-phosphates.. Its function is as follows. Bidirectionally degrades single-stranded DNA into large acid-insoluble oligonucleotides, which are then degraded further into small acid-soluble oligonucleotides. This is Exodeoxyribonuclease 7 small subunit from Leuconostoc citreum (strain KM20).